We begin with the raw amino-acid sequence, 543 residues long: CTP synthase (543 aa).

An amidoligase domain region spans residues 1 to 267 (MTKYVFVTGG…ATQVLNLLNL (267 aa)). Residue serine 13 coordinates CTP. Serine 13 serves as a coordination point for UTP. ATP contacts are provided by residues 14 to 19 (SIGKGI) and aspartate 71. Residues aspartate 71 and glutamate 141 each contribute to the Mg(2+) site. Residues 148-150 (DIE), 188-193 (KTKPTQ), and lysine 224 each bind CTP. UTP contacts are provided by residues 188 to 193 (KTKPTQ) and lysine 224. The Glutamine amidotransferase type-1 domain occupies 292–534 (EVAIVGKYVR…LAAAAKNSNR (243 aa)). Residue glycine 354 coordinates L-glutamine. The Nucleophile; for glutamine hydrolysis role is filled by cysteine 381. Residues 382–385 (LGMQ), glutamate 405, and arginine 462 contribute to the L-glutamine site. Active-site residues include histidine 507 and glutamate 509.

It belongs to the CTP synthase family. In terms of assembly, homotetramer.

The enzyme catalyses UTP + L-glutamine + ATP + H2O = CTP + L-glutamate + ADP + phosphate + 2 H(+). The catalysed reaction is L-glutamine + H2O = L-glutamate + NH4(+). It carries out the reaction UTP + NH4(+) + ATP = CTP + ADP + phosphate + 2 H(+). It participates in pyrimidine metabolism; CTP biosynthesis via de novo pathway; CTP from UDP: step 2/2. Allosterically activated by GTP, when glutamine is the substrate; GTP has no effect on the reaction when ammonia is the substrate. The allosteric effector GTP functions by stabilizing the protein conformation that binds the tetrahedral intermediate(s) formed during glutamine hydrolysis. Inhibited by the product CTP, via allosteric rather than competitive inhibition. In terms of biological role, catalyzes the ATP-dependent amination of UTP to CTP with either L-glutamine or ammonia as the source of nitrogen. Regulates intracellular CTP levels through interactions with the four ribonucleotide triphosphates. The sequence is that of CTP synthase from Thermosynechococcus vestitus (strain NIES-2133 / IAM M-273 / BP-1).